The following is a 499-amino-acid chain: Taxadiene 5-alpha hydroxylase (499 aa).

The chain crosses the membrane as a helical; Signal-anchor span at residues Thr22–Phe42. Cys445 provides a ligand contact to heme.

The protein belongs to the cytochrome P450 family. Heme serves as cofactor.

It is found in the membrane. The catalysed reaction is taxa-4(5),11(12)-diene + reduced [NADPH--hemoprotein reductase] + O2 = taxa-4(20),11-dien-5alpha-ol + oxidized [NADPH--hemoprotein reductase] + H2O + H(+). The protein operates within alkaloid biosynthesis; taxol biosynthesis; taxa-4(20),11-dien-5alpha-ol from geranylgeranyl diphosphate: step 2/2. Functionally, catalyzes the first oxygenation step of taxol biosynthesis. Can use both taxa-4(5),11(12)-diene and taxa-4(20),11(12)-diene as substrate. This is Taxadiene 5-alpha hydroxylase from Taxus cuspidata (Japanese yew).